A 482-amino-acid chain; its full sequence is Membrane-bound lytic murein transglycosylase F (482 aa).

The signal sequence occupies residues 1-18 (MKGLFLRIITALALLFWA). A non-LT domain region spans residues 19–267 (IDMVFPWQFL…NLKEKYLGHI (249 aa)). The segment at 268–482 (SQFDYVDTRS…NLEEIKENKD (215 aa)) is LT domain. Glu-312 is an active-site residue. Residues 457–470 (ENQTTNDNANNESA) show a composition bias toward polar residues. Positions 457-482 (ENQTTNDNANNESAVKNLEEIKENKD) are disordered. The span at 473 to 482 (NLEEIKENKD) shows a compositional bias: basic and acidic residues.

The protein in the N-terminal section; belongs to the bacterial solute-binding protein 3 family. This sequence in the C-terminal section; belongs to the transglycosylase Slt family.

It localises to the cell outer membrane. It carries out the reaction Exolytic cleavage of the (1-&gt;4)-beta-glycosidic linkage between N-acetylmuramic acid (MurNAc) and N-acetylglucosamine (GlcNAc) residues in peptidoglycan, from either the reducing or the non-reducing ends of the peptidoglycan chains, with concomitant formation of a 1,6-anhydrobond in the MurNAc residue.. Functionally, murein-degrading enzyme that degrades murein glycan strands and insoluble, high-molecular weight murein sacculi, with the concomitant formation of a 1,6-anhydromuramoyl product. Lytic transglycosylases (LTs) play an integral role in the metabolism of the peptidoglycan (PG) sacculus. Their lytic action creates space within the PG sacculus to allow for its expansion as well as for the insertion of various structures such as secretion systems and flagella. This Haemophilus influenzae (strain 86-028NP) protein is Membrane-bound lytic murein transglycosylase F.